A 211-amino-acid chain; its full sequence is Imidazole glycerol phosphate synthase subunit HisH (211 aa).

The 209-residue stretch at 3 to 211 folds into the Glutamine amidotransferase type-1 domain; that stretch reads VIAVIDYDMG…VNQIRVKAIA (209 aa). Cys81 acts as the Nucleophile in catalysis. Active-site residues include His186 and Glu188.

Heterodimer of HisH and HisF.

Its subcellular location is the cytoplasm. It carries out the reaction 5-[(5-phospho-1-deoxy-D-ribulos-1-ylimino)methylamino]-1-(5-phospho-beta-D-ribosyl)imidazole-4-carboxamide + L-glutamine = D-erythro-1-(imidazol-4-yl)glycerol 3-phosphate + 5-amino-1-(5-phospho-beta-D-ribosyl)imidazole-4-carboxamide + L-glutamate + H(+). It catalyses the reaction L-glutamine + H2O = L-glutamate + NH4(+). The protein operates within amino-acid biosynthesis; L-histidine biosynthesis; L-histidine from 5-phospho-alpha-D-ribose 1-diphosphate: step 5/9. In terms of biological role, IGPS catalyzes the conversion of PRFAR and glutamine to IGP, AICAR and glutamate. The HisH subunit catalyzes the hydrolysis of glutamine to glutamate and ammonia as part of the synthesis of IGP and AICAR. The resulting ammonia molecule is channeled to the active site of HisF. The polypeptide is Imidazole glycerol phosphate synthase subunit HisH (Gloeothece citriformis (strain PCC 7424) (Cyanothece sp. (strain PCC 7424))).